Here is a 694-residue protein sequence, read N- to C-terminus: Polyphosphate kinase (694 aa).

Residue Asn-45 coordinates ATP. Residues Arg-367 and Arg-397 each coordinate Mg(2+). Catalysis depends on His-427, which acts as the Phosphohistidine intermediate. Tyr-460, Arg-553, and His-580 together coordinate ATP.

This sequence belongs to the polyphosphate kinase 1 (PPK1) family. Mg(2+) serves as cofactor. Post-translationally, an intermediate of this reaction is the autophosphorylated ppk in which a phosphate is covalently linked to a histidine residue through a N-P bond.

It catalyses the reaction [phosphate](n) + ATP = [phosphate](n+1) + ADP. Its function is as follows. Catalyzes the reversible transfer of the terminal phosphate of ATP to form a long-chain polyphosphate (polyP). The chain is Polyphosphate kinase from Campylobacter coli.